A 128-amino-acid polypeptide reads, in one-letter code: Large ribosomal subunit protein bL17 (128 aa).

The protein belongs to the bacterial ribosomal protein bL17 family. As to quaternary structure, part of the 50S ribosomal subunit. Contacts protein L32.

The protein is Large ribosomal subunit protein bL17 of Klebsiella pneumoniae (strain 342).